The primary structure comprises 1581 residues: Calmodulin-regulated spectrin-associated protein 1 (1581 aa).

Residues 215–330 (ESPAHQKVRY…FIAELFWWFE (116 aa)) form the Calponin-homology (CH) domain. S216, S370, S374, and S415 each carry phosphoserine. A disordered region spans residues 351-399 (VLQQKSSRPPVPISNATKRSFLGSPAAMSPADQPPSTQPLAEGSHRYHL). The disordered stretch occupies residues 424–470 (RQKQQKVSQTEEIPDQRHRSNSLTRVDGQPRGAIGAWPDKKNRPVSQ). Phosphothreonine is present on T511. Phosphoserine occurs at positions 550, 553, 560, 572, and 586. Basic and acidic residues predominate over residues 603–617 (KQITTKEDERGEGRP). Residues 603–649 (KQITTKEDERGEGRPRTIMAKRPSEGSQPMVRKKVSGGHGSRDLNRT) are disordered. Residues S626, S718, S724, S734, and S736 each carry the phosphoserine modification. Over residues 765–785 (ESAKLQEDMKVKEHEDKDDAS) the composition is skewed to basic and acidic residues. 2 disordered regions span residues 765-803 (ESAKLQEDMKVKEHEDKDDASGRSSPCLSTTSQLSSMSM) and 821-866 (LNSC…SKDP). 2 stretches are compositionally biased toward low complexity: residues 792 to 803 (LSTTSQLSSMSM) and 826 to 837 (TKSSTSSSQKTT). The segment covering 853–865 (QKREQSPGRHSKD) has biased composition (basic and acidic residues). Residues 867–888 (ASLLASELVQLHMQLEEKRRAI) form a sufficient for interaction with SPTBN1 region. Coiled coils occupy residues 869 to 905 (LLASELVQLHMQLEEKRRAIEAQKKKMEALSARQRLK) and 1005 to 1037 (DVNECDLSIEKLNETISTLQQAILKISQQQEQL). Residues 899–918 (SARQRLKLGKAAFLHVVKKG) are sufficient for interaction with calmodulin. Disordered regions lie at residues 1064-1143 (FVEP…ELPE), 1225-1251 (PDEDGEVVGHESSVELGGDSDQKPGVG), 1288-1315 (QLEAEVELKRDEARRKAEEDRLRKEEEK), and 1332-1428 (QALE…DWET). The residue at position 1069 (S1069) is a Phosphoserine. The segment covering 1092-1103 (RPAELKVPKDRQ) has biased composition (basic and acidic residues). A compositionally biased stretch (polar residues) spans 1104–1132 (QGCSRSKTPTPSVETLPQSRSLPPSTHPR). A Phosphoserine modification is found at S1133. The segment covering 1225-1237 (PDEDGEVVGHESS) has biased composition (basic and acidic residues). A coiled-coil region spans residues 1265–1336 (AKKRAAFLLK…RRKQQQALEE (72 aa)). A compositionally biased stretch (basic residues) spans 1342 to 1353 (PKSKPKKPRPKS). Residues 1361-1372 (SDSGTKCSSTHN) are compositionally biased toward polar residues. The segment covering 1373–1390 (LSQTHSGSSLSLASAATT) has biased composition (low complexity). Residues S1378 and S1407 each carry the phosphoserine modification. The CKK domain occupies 1443 to 1576 (GPKLFKEPSS…QPKRPTVPKK (134 aa)). Residue Y1516 is modified to Phosphotyrosine.

It belongs to the CAMSAP1 family. Interacts with spectrin via SPTBN1; the interaction is direct. Interacts with calmodulin; calcium-dependent it prevents interaction with spectrin. As to expression, expressed in the central nervous system.

The protein resides in the cytoplasm. The protein localises to the cytoskeleton. In terms of biological role, key microtubule-organizing protein that specifically binds the minus-end of non-centrosomal microtubules and regulates their dynamics and organization. Specifically recognizes growing microtubule minus-ends and stabilizes microtubules. Acts on free microtubule minus-ends that are not capped by microtubule-nucleating proteins or other factors and protects microtubule minus-ends from depolymerization. In contrast to CAMSAP2 and CAMSAP3, tracks along the growing tips of minus-end microtubules without significantly affecting the polymerization rate: binds at the very tip of the microtubules minus-end and acts as a minus-end tracking protein (-TIP) that dissociates from microtubules after allowing tubulin incorporation. Through interaction with spectrin may regulate neurite outgrowth. The chain is Calmodulin-regulated spectrin-associated protein 1 (Camsap1) from Mus musculus (Mouse).